The sequence spans 383 residues: Cobalt-precorrin-5B C(1)-methyltransferase (383 aa).

The interval 1-24 is disordered; the sequence is MQPSARRPFDLATPAPNGLRRGRT.

It belongs to the CbiD family.

The catalysed reaction is Co-precorrin-5B + S-adenosyl-L-methionine = Co-precorrin-6A + S-adenosyl-L-homocysteine. Its pathway is cofactor biosynthesis; adenosylcobalamin biosynthesis; cob(II)yrinate a,c-diamide from sirohydrochlorin (anaerobic route): step 6/10. In terms of biological role, catalyzes the methylation of C-1 in cobalt-precorrin-5B to form cobalt-precorrin-6A. The sequence is that of Cobalt-precorrin-5B C(1)-methyltransferase from Ralstonia nicotianae (strain ATCC BAA-1114 / GMI1000) (Ralstonia solanacearum).